The chain runs to 247 residues: MTEHDTLVLIPARMAASRLPGKPLLDIAGLPMIAQVLRRAREARLGRVAVATDSAEIAAAVAAEGGEAVMTSADHPSGSDRIFEALEKLDGEGRIKTVINVQGDLPTIAPADIRAVLQPFAEPTVDIATLAAQIRVAAEHDNPNVVKVVGSPLSQDTLRALYFTRCTAPFGEGPRYHHIGLYAYRRTALARFVALPPSSLERREKLEQLRALEAGMRIDVRIVDSVPLGVDTPDDLEAARRILAKQA.

The protein belongs to the KdsB family.

The protein resides in the cytoplasm. The catalysed reaction is 3-deoxy-alpha-D-manno-oct-2-ulosonate + CTP = CMP-3-deoxy-beta-D-manno-octulosonate + diphosphate. It participates in nucleotide-sugar biosynthesis; CMP-3-deoxy-D-manno-octulosonate biosynthesis; CMP-3-deoxy-D-manno-octulosonate from 3-deoxy-D-manno-octulosonate and CTP: step 1/1. Its pathway is bacterial outer membrane biogenesis; lipopolysaccharide biosynthesis. Activates KDO (a required 8-carbon sugar) for incorporation into bacterial lipopolysaccharide in Gram-negative bacteria. This Afipia carboxidovorans (strain ATCC 49405 / DSM 1227 / KCTC 32145 / OM5) (Oligotropha carboxidovorans) protein is 3-deoxy-manno-octulosonate cytidylyltransferase.